The following is a 228-amino-acid chain: Large ribosomal subunit protein uL1 (228 aa).

It belongs to the universal ribosomal protein uL1 family. In terms of assembly, part of the 50S ribosomal subunit.

Its function is as follows. Binds directly to 23S rRNA. The L1 stalk is quite mobile in the ribosome, and is involved in E site tRNA release. Functionally, protein L1 is also a translational repressor protein, it controls the translation of the L11 operon by binding to its mRNA. The sequence is that of Large ribosomal subunit protein uL1 from Clavibacter michiganensis subsp. michiganensis (strain NCPPB 382).